The chain runs to 187 residues: Ribosome-recycling factor (187 aa).

Belongs to the RRF family.

The protein localises to the cytoplasm. Responsible for the release of ribosomes from messenger RNA at the termination of protein biosynthesis. May increase the efficiency of translation by recycling ribosomes from one round of translation to another. This Methylobacterium nodulans (strain LMG 21967 / CNCM I-2342 / ORS 2060) protein is Ribosome-recycling factor.